A 725-amino-acid chain; its full sequence is Lipoamidase (725 aa).

Residues 1 to 52 (MLAQESILETTVQTETESVTTETSQTVANLESETTSQTVMQEKESSSAIAES) are disordered. Positions 9-27 (ETTVQTETESVTTETSQTV) are enriched in low complexity. A compositionally biased stretch (polar residues) spans 28–40 (ANLESETTSQTVM). Catalysis depends on charge relay system residues Lys159 and Ser235. Ser259 serves as the catalytic Acyl-ester intermediate. The tract at residues 551–686 (KINQPHVEEP…NKSMIGKQEQ (136 aa)) is disordered. Residues 556–637 (HVEEPDKDKE…TSEGPIEGKD (82 aa)) are compositionally biased toward basic and acidic residues. The span at 650-661 (SGSSLDNSLNSS) shows a compositional bias: low complexity. The segment covering 662-679 (ANQGTKSTESTHAFSNKS) has biased composition (polar residues). The chain crosses the membrane as a helical span at residues 700 to 720 (PSTFWIVLGGAFLVTSGTIYI).

Belongs to the amidase family. In terms of assembly, homodimer in solution.

It localises to the cell membrane. The catalysed reaction is N(6)-[(R)-lipoyl]-L-lysyl-[lipoyl-carrier protein] + H2O = L-lysyl-[lipoyl-carrier protein] + (R)-lipoate. Lipoamidase activity is slightly inhibited by p-chloromercuribenzoate. Amidohydrolase that releases lipoic acid from the protein-bound form. Cleaves the amide bond that links lipoic acid to the lipoylated lysine epsilon-amino groups, leading to the formation of free lipoic acid plus the unmodified protein. Shows activity toward both high molecular weight protein substrates such as a lipoyl domain and intact 2-oxoacid dehydrogenases as well as small molecule substrates such as lipoyl-lysine. Also acts on small biotinylated substrates. Hydrolyzes the synthetic substrates methyl lipoate and lipoamide. The physiologically important substrates are probably lipoyl-lysine and small peptides containing lipoyl-lysine. Lpa seems likely to enable this bacterium to utilize amide-linked forms of lipoic acid that otherwise could not be assimilated. This Enterococcus faecalis (Streptococcus faecalis) protein is Lipoamidase.